Consider the following 291-residue polypeptide: Ribosomal RNA small subunit methyltransferase I (291 aa).

Belongs to the methyltransferase superfamily. RsmI family.

It is found in the cytoplasm. It catalyses the reaction cytidine(1402) in 16S rRNA + S-adenosyl-L-methionine = 2'-O-methylcytidine(1402) in 16S rRNA + S-adenosyl-L-homocysteine + H(+). Catalyzes the 2'-O-methylation of the ribose of cytidine 1402 (C1402) in 16S rRNA. The polypeptide is Ribosomal RNA small subunit methyltransferase I (Neisseria meningitidis serogroup A / serotype 4A (strain DSM 15465 / Z2491)).